Here is a 492-residue protein sequence, read N- to C-terminus: Ketol-acid reductoisomerase (NADP(+)) (492 aa).

A KARI N-terminal Rossmann domain is found at 17–208 (LGVCEFMDRS…GGDRAGVLKS (192 aa)). NADP(+) is bound by residues 45–48 (CGAQ), Arg68, Arg76, Ser78, and 108–110 (DKQ). Residue His132 is part of the active site. Gly158 is a binding site for NADP(+). KARI C-terminal knotted domains follow at residues 209–353 (SFVA…AEQE) and 354–487 (YYDN…MTEM). Mg(2+)-binding residues include Asp217, Glu221, Glu389, and Glu393. Ser414 is a binding site for substrate.

Belongs to the ketol-acid reductoisomerase family. It depends on Mg(2+) as a cofactor.

The enzyme catalyses (2R)-2,3-dihydroxy-3-methylbutanoate + NADP(+) = (2S)-2-acetolactate + NADPH + H(+). It carries out the reaction (2R,3R)-2,3-dihydroxy-3-methylpentanoate + NADP(+) = (S)-2-ethyl-2-hydroxy-3-oxobutanoate + NADPH + H(+). Its pathway is amino-acid biosynthesis; L-isoleucine biosynthesis; L-isoleucine from 2-oxobutanoate: step 2/4. The protein operates within amino-acid biosynthesis; L-valine biosynthesis; L-valine from pyruvate: step 2/4. Its function is as follows. Involved in the biosynthesis of branched-chain amino acids (BCAA). Catalyzes an alkyl-migration followed by a ketol-acid reduction of (S)-2-acetolactate (S2AL) to yield (R)-2,3-dihydroxy-isovalerate. In the isomerase reaction, S2AL is rearranged via a Mg-dependent methyl migration to produce 3-hydroxy-3-methyl-2-ketobutyrate (HMKB). In the reductase reaction, this 2-ketoacid undergoes a metal-dependent reduction by NADPH to yield (R)-2,3-dihydroxy-isovalerate. This chain is Ketol-acid reductoisomerase (NADP(+)), found in Cytophaga hutchinsonii (strain ATCC 33406 / DSM 1761 / CIP 103989 / NBRC 15051 / NCIMB 9469 / D465).